A 247-amino-acid polypeptide reads, in one-letter code: Carboxy-S-adenosyl-L-methionine synthase (247 aa).

S-adenosyl-L-methionine-binding positions include Y39, G64–S66, D89–N90, D117–I118, N132, and R199.

It belongs to the class I-like SAM-binding methyltransferase superfamily. Cx-SAM synthase family. As to quaternary structure, homodimer.

It carries out the reaction prephenate + S-adenosyl-L-methionine = carboxy-S-adenosyl-L-methionine + 3-phenylpyruvate + H2O. In terms of biological role, catalyzes the conversion of S-adenosyl-L-methionine (SAM) to carboxy-S-adenosyl-L-methionine (Cx-SAM). This chain is Carboxy-S-adenosyl-L-methionine synthase, found in Escherichia fergusonii (strain ATCC 35469 / DSM 13698 / CCUG 18766 / IAM 14443 / JCM 21226 / LMG 7866 / NBRC 102419 / NCTC 12128 / CDC 0568-73).